A 133-amino-acid polypeptide reads, in one-letter code: Large ribosomal subunit protein bL19 (133 aa).

It belongs to the bacterial ribosomal protein bL19 family.

Its function is as follows. This protein is located at the 30S-50S ribosomal subunit interface and may play a role in the structure and function of the aminoacyl-tRNA binding site. The protein is Large ribosomal subunit protein bL19 of Sulfurihydrogenibium sp. (strain YO3AOP1).